The primary structure comprises 474 residues: MTKKLLIKTWGCQMNEYDSSKMADLLGAANGYELTEEPTEADVLLLNTCSIREKAQEKVFHQLGRWKNLKDKKPDLVIGVGGCVATQEGDHIRQRAPYVDVIFGPQTLHRLPEMIRQSQSNEKPVMDISFPEIEKFDNLPEPKAEGATAFVSIMEGCSKYCTYCVVPYTRGEEVSRPLDDVLFEIAQLAEQGVREVNLLGQNVNAYRGPMHDGDICTFAELLRMVASIDGIDRLRFTTSHPLEFGDDIIAVYEDTPELVSFLHLPVQSGSDRILTMMKRPHTAIEYKSIIRKLRKARPDIQISSDFIVGFPGETAKDFQDTMKLIKDVDFDMSFSFIFSARPGTPAADYPCDIPEQEKKDRLAELQQQVNSQAMRYSRLMLDTEQRVLVEGPSKKNLMELRARTENNRVVNFEGSADLIGQFVDVKITDVFANSLRGELVRTEKDMGLRVVMTPAEMMEKTRREDDLGVGTFTP.

Positions 3 to 120 constitute an MTTase N-terminal domain; that stretch reads KKLLIKTWGC…LPEMIRQSQS (118 aa). 6 residues coordinate [4Fe-4S] cluster: Cys-12, Cys-49, Cys-83, Cys-157, Cys-161, and Cys-164. One can recognise a Radical SAM core domain in the interval 143–375; the sequence is KAEGATAFVS…QQQVNSQAMR (233 aa). Residues 378 to 441 form the TRAM domain; it reads RLMLDTEQRV…ANSLRGELVR (64 aa).

Belongs to the methylthiotransferase family. MiaB subfamily. Monomer. [4Fe-4S] cluster is required as a cofactor.

The protein resides in the cytoplasm. It catalyses the reaction N(6)-dimethylallyladenosine(37) in tRNA + (sulfur carrier)-SH + AH2 + 2 S-adenosyl-L-methionine = 2-methylsulfanyl-N(6)-dimethylallyladenosine(37) in tRNA + (sulfur carrier)-H + 5'-deoxyadenosine + L-methionine + A + S-adenosyl-L-homocysteine + 2 H(+). In terms of biological role, catalyzes the methylthiolation of N6-(dimethylallyl)adenosine (i(6)A), leading to the formation of 2-methylthio-N6-(dimethylallyl)adenosine (ms(2)i(6)A) at position 37 in tRNAs that read codons beginning with uridine. The polypeptide is tRNA-2-methylthio-N(6)-dimethylallyladenosine synthase (Aliivibrio fischeri (strain ATCC 700601 / ES114) (Vibrio fischeri)).